The primary structure comprises 685 residues: Kinesin-related protein 11 (685 aa).

The Kinesin motor domain occupies asparagine 4 to isoleucine 405. Residues threonine 36–threonine 105 form a disordered region. Positions serine 47–threonine 105 are enriched in low complexity. Glycine 156 to threonine 163 contributes to the ATP binding site. Residues valine 411 to leucine 488 are a coiled coil. Residues asparagine 495–glycine 568 are disordered. The segment covering arginine 511–asparagine 520 has biased composition (polar residues). Residues proline 533–threonine 565 are compositionally biased toward low complexity. Residues phenylalanine 574 to valine 683 are a coiled coil.

This sequence belongs to the TRAFAC class myosin-kinesin ATPase superfamily. Kinesin family.

The protein resides in the cytoplasm. It localises to the cytoskeleton. Functionally, microtubule-associated force-producing protein that plays a role in organelle transport. Its motor activity is directed toward the microtubule's plus end. In Dictyostelium discoideum (Social amoeba), this protein is Kinesin-related protein 11 (kif11).